The sequence spans 208 residues: Thymidylate kinase (208 aa).

ATP is bound at residue 11 to 18; the sequence is GGEGVGKS.

The protein belongs to the thymidylate kinase family.

The catalysed reaction is dTMP + ATP = dTDP + ADP. In terms of biological role, phosphorylation of dTMP to form dTDP in both de novo and salvage pathways of dTTP synthesis. This chain is Thymidylate kinase, found in Methylococcus capsulatus (strain ATCC 33009 / NCIMB 11132 / Bath).